A 364-amino-acid chain; its full sequence is MIRIFALITALAITVKCQDDRRPFYVIGHMVNSIPQVSQFLELGTNAIESDVEFSENGTALRTFHGLPCDCLRRCKESADIVDYFQYIRNVTGFRHSEYSEKLLLVFLDLKVSKLPPESKYAAGVDIATKLVLHLWDGVPFYDAMNVLLSIGRASDMAVLTGAIDTIIGFDPSLSLFNHVGFDVGLNDKLENIAKMYERLGVNGHRWQGDGITNCLVNLRSPLRLKETISYRDTNKRESYVDKVYYWTVDKVATIRKTIRRGVDAIITNRPKRVTGVLEEDEFKKTVRPATYRDDPWMRLQSKTTGRGNELDSDMDEMGDEASEFDFEPFSYPLSPRRPLSSRSPAIRDSYNVWPQYNPLSPFY.

A signal peptide spans 1–17 (MIRIFALITALAITVKC). Residue His-29 is the Nucleophile of the active site. Mg(2+) contacts are provided by Glu-49 and Asp-51. His-65 is an active-site residue. 2 disulfides stabilise this stretch: Cys-69-Cys-75 and Cys-71-Cys-215. Asp-109 provides a ligand contact to Mg(2+).

This sequence belongs to the arthropod phospholipase D family. Requires Mg(2+) as cofactor. In terms of tissue distribution, expressed in salivary glands.

The protein resides in the secreted. It catalyses the reaction an N-(acyl)-sphingosylphosphocholine = an N-(acyl)-sphingosyl-1,3-cyclic phosphate + choline. It carries out the reaction an N-(acyl)-sphingosylphosphoethanolamine = an N-(acyl)-sphingosyl-1,3-cyclic phosphate + ethanolamine. The catalysed reaction is a 1-acyl-sn-glycero-3-phosphocholine = a 1-acyl-sn-glycero-2,3-cyclic phosphate + choline. The enzyme catalyses a 1-acyl-sn-glycero-3-phosphoethanolamine = a 1-acyl-sn-glycero-2,3-cyclic phosphate + ethanolamine. Functionally, dermonecrotic toxins cleave the phosphodiester linkage between the phosphate and headgroup of certain phospholipids (sphingolipid and lysolipid substrates), forming an alcohol (often choline) and a cyclic phosphate. Acts on sphingomyelin (SM). It may also act on ceramide phosphoethanolamine (CPE), lysophosphatidylcholine (LPC) and lysophosphatidylethanolamine (LPE), but not on lysophosphatidylserine (LPS), and lysophosphatidylglycerol (LPG). It acts by transphosphatidylation, releasing exclusively cyclic phosphate products as second products. Induces dermonecrosis, hemolysis, increased vascular permeability, edema, inflammatory response, and platelet aggregation. This chain is Dermonecrotic toxin SPH (SPH), found in Ixodes scapularis (Black-legged tick).